We begin with the raw amino-acid sequence, 476 residues long: Transposase for transposon Tn5 (476 aa).

An interaction with DNA region spans residues 1 to 70 (MITSALHRAA…YRFIRNPNVS (70 aa)). Residues Asp-97 and Asp-188 each contribute to the Mg(2+) site. Interaction with DNA stretches follow at residues 237-255 (YQIS…KRKN) and 319-348 (YTHR…EPDN). Glu-326 provides a ligand contact to Mg(2+). Positions 369 to 476 (SFTLPQALRA…KDLMAQGIKI (108 aa)) are important for dimerization.

This sequence belongs to the transposase 11 family. Monomer. Homodimer of tnp (isoform 1), and heterodimer of tnp (isoform 1) and inh (isoform 2). Mg(2+) serves as cofactor.

Mediates transposition of transposon Tn5 by a 'cut and paste' mechanism. First, the monomeric transposase binds the 19 bp inverted DNA repeats flanking the transposon. Then, dimerization of the DNA-bound transposase creates a synaptic DNA complex. After nicking of the first DNA strand, excision of the transposon proceeds through a series of intermediates. The transposase then mediates the insertion of the transposon at a new site by strand transfer. The activity of the wild-type transposase is very low, and is further inhibited by dimerization with the transposase inhibitor (inh). The protein is Transposase for transposon Tn5 (tnpA) of Escherichia coli.